The chain runs to 244 residues: 5-oxoprolinase subunit A (244 aa).

It belongs to the LamB/PxpA family. As to quaternary structure, forms a complex composed of PxpA, PxpB and PxpC.

It catalyses the reaction 5-oxo-L-proline + ATP + 2 H2O = L-glutamate + ADP + phosphate + H(+). Its function is as follows. Catalyzes the cleavage of 5-oxoproline to form L-glutamate coupled to the hydrolysis of ATP to ADP and inorganic phosphate. This Salmonella schwarzengrund (strain CVM19633) protein is 5-oxoprolinase subunit A.